The primary structure comprises 365 residues: Zinc finger TRAF-type-containing protein 1-B (365 aa).

Positions 1-56 (MSEEREAPGPLASSSAGLGAEVGQEEVPGGAGPARLLLLPSDSDGPPKKRLRSEAE) are disordered. The RING-type; degenerate zinc finger occupies 72–117 (CAVCLDLPKASVYQCTNGHLMCAGCFIHLLADARLKEEQATCPNCR). A TRAF-type zinc finger spans residues 113–186 (CPNCRCEISK…PWQGPYHELT (74 aa)).

This sequence belongs to the ZFTRAF1 family. Interacts with LGALS3.

The protein localises to the cytoplasm. The sequence is that of Zinc finger TRAF-type-containing protein 1-B from Xenopus laevis (African clawed frog).